Consider the following 172-residue polypeptide: Small ribosomal subunit protein uS5 (172 aa).

One can recognise an S5 DRBM domain in the interval 16-79; it reads LKDRLVAINR…EAAKKNLIRV (64 aa).

This sequence belongs to the universal ribosomal protein uS5 family. Part of the 30S ribosomal subunit. Contacts proteins S4 and S8.

With S4 and S12 plays an important role in translational accuracy. Functionally, located at the back of the 30S subunit body where it stabilizes the conformation of the head with respect to the body. The protein is Small ribosomal subunit protein uS5 of Porphyromonas gingivalis (strain ATCC BAA-308 / W83).